A 379-amino-acid chain; its full sequence is Spermidine/putrescine import ATP-binding protein PotA (379 aa).

Residues 10–240 (VTIDQVSKAY…PATDFVAKFI (231 aa)) enclose the ABC transporter domain. 42–49 (GPSGCGKT) lines the ATP pocket.

It belongs to the ABC transporter superfamily. Spermidine/putrescine importer (TC 3.A.1.11.1) family. In terms of assembly, the complex is composed of two ATP-binding proteins (PotA), two transmembrane proteins (PotB and PotC) and a solute-binding protein (PotD).

The protein localises to the cell inner membrane. It carries out the reaction ATP + H2O + polyamine-[polyamine-binding protein]Side 1 = ADP + phosphate + polyamineSide 2 + [polyamine-binding protein]Side 1.. Its function is as follows. Part of the ABC transporter complex PotABCD involved in spermidine/putrescine import. Responsible for energy coupling to the transport system. This Treponema pallidum (strain Nichols) protein is Spermidine/putrescine import ATP-binding protein PotA.